Here is a 349-residue protein sequence, read N- to C-terminus: uncharacterized protein (349 aa).

A signal peptide spans 1–25 (MNKYIKQGAPILGILLAVMFGGREG).

This sequence belongs to the bacterial solute-binding protein 1 family. WtpA subfamily.

This is an uncharacterized protein from Methanococcus aeolicus (strain ATCC BAA-1280 / DSM 17508 / OCM 812 / Nankai-3).